Reading from the N-terminus, the 404-residue chain is uncharacterized protein (404 aa).

The next 12 helical transmembrane spans lie at 16 to 36, 49 to 69, 79 to 99, 110 to 130, 133 to 153, 166 to 186, 221 to 241, 252 to 272, 283 to 303, 307 to 327, 342 to 362, and 364 to 384; these read FAFF…QPLM, AASL…LVFG, PIMG…AFSP, IQGV…GEEI, GSLG…AVFG, WHMA…IFFI, FLIG…IVYV, AFSS…SFIG, ILVM…NNML, ILGI…ASSW, LYLF…GLFW, and GFHW…ALWL.

It belongs to the major facilitator superfamily.

The protein resides in the cell membrane. This is an uncharacterized protein from Bacillus subtilis (strain 168).